We begin with the raw amino-acid sequence, 179 residues long: MAKKKVKYTFDYDSKFLNEHNVKKLAYELTHDSDTSNKILDCLFTAEVTDEQIAEATGIKLNFVRKILYKFYDVGMANYTRKKDPETQWFTYYWRFDSRKAAQILEKQYNHHNQEIKESIEYEENNMFFVCPNGCRYPFDEATEFQFICPRCNEKLEFKDNSDLIHDLKKLESAYKINE.

The 102-residue stretch at 1–102 (MAKKKVKYTF…YWRFDSRKAA (102 aa)) folds into the HTH TFE/IIEalpha-type domain.

The protein belongs to the TFE family. Monomer. Interaction with RNA polymerase subunits RpoF and RpoE is necessary for Tfe stimulatory transcription activity. Able to interact with Tbp and RNA polymerase in the absence of DNA promoter. Interacts both with the preinitiation and elongation complexes.

Its function is as follows. Transcription factor that plays a role in the activation of archaeal genes transcribed by RNA polymerase. Facilitates transcription initiation by enhancing TATA-box recognition by TATA-box-binding protein (Tbp), and transcription factor B (Tfb) and RNA polymerase recruitment. Not absolutely required for transcription in vitro, but particularly important in cases where Tbp or Tfb function is not optimal. It dynamically alters the nucleic acid-binding properties of RNA polymerases by stabilizing the initiation complex and destabilizing elongation complexes. Seems to translocate with the RNA polymerase following initiation and acts by binding to the non template strand of the transcription bubble in elongation complexes. In Methanosphaera stadtmanae (strain ATCC 43021 / DSM 3091 / JCM 11832 / MCB-3), this protein is Transcription factor E.